We begin with the raw amino-acid sequence, 398 residues long: Exodeoxyribonuclease 7 large subunit (398 aa).

Belongs to the XseA family. In terms of assembly, heterooligomer composed of large and small subunits.

It localises to the cytoplasm. It catalyses the reaction Exonucleolytic cleavage in either 5'- to 3'- or 3'- to 5'-direction to yield nucleoside 5'-phosphates.. Functionally, bidirectionally degrades single-stranded DNA into large acid-insoluble oligonucleotides, which are then degraded further into small acid-soluble oligonucleotides. The sequence is that of Exodeoxyribonuclease 7 large subunit from Salinibacter ruber (strain DSM 13855 / M31).